We begin with the raw amino-acid sequence, 1333 residues long: Xanthine dehydrogenase/oxidase (1333 aa).

In terms of domain architecture, 2Fe-2S ferredoxin-type spans 4-91; the sequence is DKLVFFVNGR…HVAVTTVEGI (88 aa). Residues cysteine 43, cysteine 48, cysteine 51, cysteine 73, cysteine 113, cysteine 116, cysteine 148, and cysteine 150 each contribute to the [2Fe-2S] cluster site. The region spanning 229 to 414 is the FAD-binding PCMH-type domain; sequence FEGERVTWIQ…LSIEIPYSRE (186 aa). FAD contacts are provided by residues 257–264, phenylalanine 337, 347–351, aspartate 360, leucine 404, and lysine 422; these read LVVGNTEI and SVGGN. 2 cysteine pairs are disulfide-bonded: cysteine 509/cysteine 1318 and cysteine 536/cysteine 993. 2 residues coordinate Mo-molybdopterin: glutamine 768 and phenylalanine 799. The substrate site is built by glutamate 803 and arginine 881. Residue arginine 913 coordinates Mo-molybdopterin. Residues phenylalanine 915 and threonine 1011 each contribute to the substrate site. Alanine 1080 is a Mo-molybdopterin binding site. Glutamate 1262 acts as the Proton acceptor in catalysis.

It belongs to the xanthine dehydrogenase family. Homodimer. Interacts with BTN1A1. Requires [2Fe-2S] cluster as cofactor. FAD is required as a cofactor. The cofactor is Mo-molybdopterin. In terms of processing, subject to partial proteolysis; this alters the enzyme from the dehydrogenase form (D) to the oxidase form (O). Post-translationally, contains sulfhydryl groups that are easily oxidized (in vitro); this alters the enzyme from the dehydrogenase form (D) to the oxidase form (O). In terms of tissue distribution, detected in milk (at protein level).

The protein localises to the cytoplasm. It localises to the peroxisome. Its subcellular location is the secreted. It catalyses the reaction xanthine + NAD(+) + H2O = urate + NADH + H(+). The enzyme catalyses hypoxanthine + NAD(+) + H2O = xanthine + NADH + H(+). The catalysed reaction is xanthine + O2 + H2O = urate + H2O2. Can be converted from the dehydrogenase form (D) to the oxidase form (O) irreversibly by proteolysis or reversibly through the oxidation of sulfhydryl groups. Key enzyme in purine degradation. Catalyzes the oxidation of hypoxanthine to xanthine. Catalyzes the oxidation of xanthine to uric acid. Contributes to the generation of reactive oxygen species. Has also low oxidase activity towards aldehydes (in vitro). This Homo sapiens (Human) protein is Xanthine dehydrogenase/oxidase (XDH).